The following is a 128-amino-acid chain: Large ribosomal subunit protein bL12 (128 aa).

It belongs to the bacterial ribosomal protein bL12 family. In terms of assembly, homodimer. Part of the ribosomal stalk of the 50S ribosomal subunit. Forms a multimeric L10(L12)X complex, where L10 forms an elongated spine to which 2 to 4 L12 dimers bind in a sequential fashion. Binds GTP-bound translation factors.

Functionally, forms part of the ribosomal stalk which helps the ribosome interact with GTP-bound translation factors. Is thus essential for accurate translation. The chain is Large ribosomal subunit protein bL12 from Corynebacterium glutamicum (strain R).